Here is a 68-residue protein sequence, read N- to C-terminus: DNA-directed RNA polymerase subunit Rpo10 (68 aa).

Residues Cys7, Cys10, Cys44, and Cys45 each contribute to the Zn(2+) site.

The protein belongs to the archaeal Rpo10/eukaryotic RPB10 RNA polymerase subunit family. As to quaternary structure, part of the RNA polymerase complex. Zn(2+) serves as cofactor.

The protein resides in the cytoplasm. It carries out the reaction RNA(n) + a ribonucleoside 5'-triphosphate = RNA(n+1) + diphosphate. DNA-dependent RNA polymerase (RNAP) catalyzes the transcription of DNA into RNA using the four ribonucleoside triphosphates as substrates. In Methanococcus maripaludis (strain C5 / ATCC BAA-1333), this protein is DNA-directed RNA polymerase subunit Rpo10.